Here is a 401-residue protein sequence, read N- to C-terminus: Rho-N domain-containing protein 1, chloroplastic (401 aa).

The transit peptide at 1–63 (MAMSGTFHLT…VPNRSSFVCR (63 aa)) directs the protein to the chloroplast. Disordered regions lie at residues 73–129 (PDFS…PGPR) and 180–361 (KHSG…EEAV). Polar residues-rich tracts occupy residues 102-126 (DMLS…TSSP), 210-223 (TGNL…DNNA), and 240-265 (PRSQ…VTWT). Over residues 266-290 (QKKDTVELHDEPEHEPAYEHEHEPE) the composition is skewed to basic and acidic residues. Over residues 339 to 358 (LSDDDESLDDADEDSDEAEE) the composition is skewed to acidic residues. A coiled-coil region spans residues 339–371 (LSDDDESLDDADEDSDEAEEEAVKDLSELKLVE).

Homodimer or homomultimer. Part of a chloroplastic degradosome-like complex. Interacts with RNE.

The protein localises to the plastid. It localises to the chloroplast. In terms of biological role, binds to and supports processing of specific plastid RNAs. Associates via its C-terminal Rho-N domain to single stranded regions of 16S and 23S rRNAs or to rbcL mRNAs. May be involved in targeting transcripts to RNases such as RNE or RNase J. This Arabidopsis thaliana (Mouse-ear cress) protein is Rho-N domain-containing protein 1, chloroplastic (RHON1).